We begin with the raw amino-acid sequence, 95 residues long: MIMASICTMAWVYGSVQGVGFRYSTQREALQLGVTGYARNLDDGGVEVLVCGEAEQVEKLIAWLKAGGPRSARVDRVLTEPHQPTRSWDKFAILY.

The region spanning 7–95 (CTMAWVYGSV…RSWDKFAILY (89 aa)) is the Acylphosphatase-like domain. Residues Arg22 and Asn40 contribute to the active site.

The protein belongs to the acylphosphatase family.

The enzyme catalyses an acyl phosphate + H2O = a carboxylate + phosphate + H(+). In Klebsiella pneumoniae subsp. pneumoniae (strain ATCC 700721 / MGH 78578), this protein is Acylphosphatase (acyP).